A 73-amino-acid chain; its full sequence is Putative defensin-like protein 277 (73 aa).

A signal peptide spans 1–24; sequence MSAQKIYLASLLLFICLVFPQSTA. 4 disulfides stabilise this stretch: C27-C64, C33-C52, C39-C62, and C43-C63.

The protein belongs to the DEFL family.

It localises to the secreted. The polypeptide is Putative defensin-like protein 277 (Arabidopsis thaliana (Mouse-ear cress)).